Here is a 352-residue protein sequence, read N- to C-terminus: tRNA-specific 2-thiouridylase MnmA (352 aa).

Residues 6–13 (AMSGGVDS) and leucine 32 each bind ATP. Cysteine 101 functions as the Nucleophile in the catalytic mechanism. The cysteines at positions 101 and 194 are disulfide-linked. Glycine 125 contributes to the ATP binding site. Residues 144-146 (KDQ) are interaction with tRNA. Cysteine 194 serves as the catalytic Cysteine persulfide intermediate.

This sequence belongs to the MnmA/TRMU family.

It localises to the cytoplasm. The catalysed reaction is S-sulfanyl-L-cysteinyl-[protein] + uridine(34) in tRNA + AH2 + ATP = 2-thiouridine(34) in tRNA + L-cysteinyl-[protein] + A + AMP + diphosphate + H(+). Its function is as follows. Catalyzes the 2-thiolation of uridine at the wobble position (U34) of tRNA, leading to the formation of s(2)U34. The chain is tRNA-specific 2-thiouridylase MnmA from Frankia casuarinae (strain DSM 45818 / CECT 9043 / HFP020203 / CcI3).